The following is a 154-amino-acid chain: Protein-export protein SecB (154 aa).

Belongs to the SecB family. As to quaternary structure, homotetramer, a dimer of dimers. One homotetramer interacts with 1 SecA dimer.

It is found in the cytoplasm. Its function is as follows. One of the proteins required for the normal export of preproteins out of the cell cytoplasm. It is a molecular chaperone that binds to a subset of precursor proteins, maintaining them in a translocation-competent state. It also specifically binds to its receptor SecA. The sequence is that of Protein-export protein SecB from Blochmanniella pennsylvanica (strain BPEN).